The sequence spans 405 residues: tRNA-specific 2-thiouridylase MnmA (405 aa).

ATP contacts are provided by residues 41–48 (AMSGGVDS) and Leu67. The active-site Nucleophile is Cys135. Cys135 and Cys231 are joined by a disulfide. Residue Gly159 coordinates ATP. Positions 181–183 (KDQ) are interaction with tRNA. Cys231 functions as the Cysteine persulfide intermediate in the catalytic mechanism.

It belongs to the MnmA/TRMU family.

Its subcellular location is the cytoplasm. The catalysed reaction is S-sulfanyl-L-cysteinyl-[protein] + uridine(34) in tRNA + AH2 + ATP = 2-thiouridine(34) in tRNA + L-cysteinyl-[protein] + A + AMP + diphosphate + H(+). Catalyzes the 2-thiolation of uridine at the wobble position (U34) of tRNA, leading to the formation of s(2)U34. This is tRNA-specific 2-thiouridylase MnmA from Maricaulis maris (strain MCS10) (Caulobacter maris).